A 318-amino-acid polypeptide reads, in one-letter code: Deoxyribose-phosphate aldolase (318 aa).

The Proton donor/acceptor role is filled by aspartate 155. The Schiff-base intermediate with acetaldehyde role is filled by lysine 218. Lysine 254 functions as the Proton donor/acceptor in the catalytic mechanism.

It belongs to the DeoC/FbaB aldolase family. DeoC type 2 subfamily. Interacts with YBX1.

The protein localises to the cytoplasm. Its subcellular location is the cytoplasmic granule. The protein resides in the nucleus. It carries out the reaction 2-deoxy-D-ribose 5-phosphate = D-glyceraldehyde 3-phosphate + acetaldehyde. It functions in the pathway carbohydrate degradation; 2-deoxy-D-ribose 1-phosphate degradation; D-glyceraldehyde 3-phosphate and acetaldehyde from 2-deoxy-alpha-D-ribose 1-phosphate: step 2/2. Its function is as follows. Catalyzes a reversible aldol reaction between acetaldehyde and D-glyceraldehyde 3-phosphate to generate 2-deoxy-D-ribose 5-phosphate. Participates in stress granule (SG) assembly. May allow ATP production from extracellular deoxyinosine in conditions of energy deprivation. The polypeptide is Deoxyribose-phosphate aldolase (Dera) (Mus musculus (Mouse)).